The sequence spans 122 residues: Iron-sulfur cluster assembly protein SufA (122 aa).

The [2Fe-2S] cluster site is built by Cys-50, Cys-114, and Cys-116. 3 residues coordinate [4Fe-4S] cluster: Cys-50, Cys-114, and Cys-116.

This sequence belongs to the HesB/IscA family. As to quaternary structure, homodimer. Interacts with SufB and SufC.

Its function is as follows. Member of gene cluster sufABCDSE that mediates iron-sulfur cluster assembly under oxidative stress and iron limitation conditions. Binds [2Fe-2S] and [4Fe-4S] clusters by mobilizing sulfur atoms provided by the SufS-SufE cysteine desulfurase system and then transfers the assembled Fe-S clusters to target proteins including ferredoxin and aconitase. Seems to act as a Fe-S cluster carrier rather than a scaffold, this role being performed by SufB and SufC. The polypeptide is Iron-sulfur cluster assembly protein SufA (sufA) (Escherichia coli (strain K12)).